The chain runs to 319 residues: Acetyl-coenzyme A carboxylase carboxyl transferase subunit alpha (319 aa).

Residues 35–296 enclose the CoA carboxyltransferase C-terminal domain; it reads DLDKEIEQLE…KATLLRQLAE (262 aa).

Belongs to the AccA family. In terms of assembly, acetyl-CoA carboxylase is a heterohexamer composed of biotin carboxyl carrier protein (AccB), biotin carboxylase (AccC) and two subunits each of ACCase subunit alpha (AccA) and ACCase subunit beta (AccD).

Its subcellular location is the cytoplasm. The catalysed reaction is N(6)-carboxybiotinyl-L-lysyl-[protein] + acetyl-CoA = N(6)-biotinyl-L-lysyl-[protein] + malonyl-CoA. The protein operates within lipid metabolism; malonyl-CoA biosynthesis; malonyl-CoA from acetyl-CoA: step 1/1. In terms of biological role, component of the acetyl coenzyme A carboxylase (ACC) complex. First, biotin carboxylase catalyzes the carboxylation of biotin on its carrier protein (BCCP) and then the CO(2) group is transferred by the carboxyltransferase to acetyl-CoA to form malonyl-CoA. This is Acetyl-coenzyme A carboxylase carboxyl transferase subunit alpha from Vibrio vulnificus (strain CMCP6).